The following is a 229-amino-acid chain: Small ribosomal subunit protein uS3 (229 aa).

A KH type-2 domain is found at 39-107; it reads VRQFLIKELK…PAQINISEVR (69 aa).

The protein belongs to the universal ribosomal protein uS3 family. Part of the 30S ribosomal subunit. Forms a tight complex with proteins S10 and S14.

Functionally, binds the lower part of the 30S subunit head. Binds mRNA in the 70S ribosome, positioning it for translation. This is Small ribosomal subunit protein uS3 from Photobacterium profundum (strain SS9).